Here is a 342-residue protein sequence, read N- to C-terminus: Isopentenyl-diphosphate delta-isomerase (342 aa).

11 to 12 (RK) contributes to the substrate binding site. FMN contacts are provided by residues Ser-68, 69–71 (SMT), Ser-99, and Asn-127. 99 to 101 (SMR) serves as a coordination point for substrate. Gln-162 is a binding site for substrate. A Mg(2+)-binding site is contributed by Glu-163. Residues Lys-194, Thr-224, 274–276 (GLK), and 295–296 (AG) contribute to the FMN site.

The protein belongs to the IPP isomerase type 2 family. In terms of assembly, homooctamer. Dimer of tetramers. It depends on FMN as a cofactor. NADPH serves as cofactor. Mg(2+) is required as a cofactor.

The protein resides in the cytoplasm. The enzyme catalyses isopentenyl diphosphate = dimethylallyl diphosphate. Functionally, involved in the biosynthesis of isoprenoids. Catalyzes the 1,3-allylic rearrangement of the homoallylic substrate isopentenyl (IPP) to its allylic isomer, dimethylallyl diphosphate (DMAPP). The protein is Isopentenyl-diphosphate delta-isomerase of Rickettsia akari (strain Hartford).